Here is a 346-residue protein sequence, read N- to C-terminus: Large ribosomal subunit protein uL10 (346 aa).

Residues 307-346 (AAAVAKEPEKKEEVKEEEEEEEEEDHSEEDGMAGLGSLFG) form a disordered region. Positions 321 to 337 (KEEEEEEEEEDHSEEDG) are enriched in acidic residues.

It belongs to the universal ribosomal protein uL10 family. As to quaternary structure, part of the 50S ribosomal subunit. Forms part of the ribosomal stalk which helps the ribosome interact with GTP-bound translation factors. Forms both a pentameric L10(L12)2(L12)2 and heptameric L10(L12)2(L12)2(L12)2 complex, where L10 forms an elongated spine to which the L12 dimers bind in a sequential fashion. The proportion of heptameric complexes increases during cell growth.

Its function is as follows. Forms part of the ribosomal stalk, playing a central role in the interaction of the ribosome with GTP-bound translation factors. This chain is Large ribosomal subunit protein uL10, found in Methanosarcina barkeri (strain Fusaro / DSM 804).